The following is a 605-amino-acid chain: Aspartate--tRNA(Asp/Asn) ligase (605 aa).

An L-aspartate-binding site is contributed by E186. The aspartate stretch occupies residues 210–213; it reads QQFK. The L-aspartate site is built by R232 and H460. 232-234 is an ATP binding site; it reads RDE. E494 contacts ATP. R501 provides a ligand contact to L-aspartate. 546–549 contacts ATP; it reads GLDR.

It belongs to the class-II aminoacyl-tRNA synthetase family. Type 1 subfamily. Homodimer.

Its subcellular location is the cytoplasm. The catalysed reaction is tRNA(Asx) + L-aspartate + ATP = L-aspartyl-tRNA(Asx) + AMP + diphosphate. Its function is as follows. Aspartyl-tRNA synthetase with relaxed tRNA specificity since it is able to aspartylate not only its cognate tRNA(Asp) but also tRNA(Asn). Reaction proceeds in two steps: L-aspartate is first activated by ATP to form Asp-AMP and then transferred to the acceptor end of tRNA(Asp/Asn). The polypeptide is Aspartate--tRNA(Asp/Asn) ligase (Chlorobium chlorochromatii (strain CaD3)).